Here is a 1242-residue protein sequence, read N- to C-terminus: Reverse gyrase 1 (1242 aa).

The RG N-terminal-type zinc finger occupies 6 to 46 (KVPPSIYTRSCPNCGGNISSQRLFNGSVCESCLKDDREFSN). Zn(2+) is bound by residues Cys16, Cys19, Cys34, and Cys37. ATP is bound by residues Gln93 and 110–117 (APPGLGKT). Residues 97–298 (TIRFLRGESF…SLMGFRPGSS (202 aa)) enclose the Helicase ATP-binding domain. Residues 214 to 217 (DDVD) carry the DEAD box motif. The interval 615-1242 (LSVKTTLFIV…ELYNEIQTIS (628 aa)) is topoisomerase I. The region spanning 619–785 (TTLFIVESPN…NIKRAEFHEV (167 aa)) is the Toprim domain. Mg(2+) is bound at residue Glu625. An RG C-terminal-type; atypical zinc finger spans residues 703 to 731 (IKKCEKGHQIVKDLSQNKCPICGSRIVTD). Zn(2+) is bound by residues Cys706, His710, Cys721, and Cys724. Asp754 is a Mg(2+) binding site. The Topo IA-type catalytic domain occupies 801–1242 (NDNLVKSQIV…ELYNEIQTIS (442 aa)). The active-site O-(5'-phospho-DNA)-tyrosine intermediate is Tyr965.

It in the N-terminal section; belongs to the DEAD box helicase family. DDVD subfamily. The protein in the C-terminal section; belongs to the type IA topoisomerase family. Monomer. Zn(2+) is required as a cofactor. The cofactor is Mg(2+).

The protein resides in the cytoplasm. It carries out the reaction ATP + H2O = ADP + phosphate + H(+). At least one of the two reverse gyrase proteins is inhibited by actinomycin D. Highly sensitive to NaCl concentrations, maximal positive supercoiling is observed with 10 mM NaCl; as NaCl rises, supercoiling decreases. At 300 mM NaCl relaxes but does not introduce positive supercoils into negatively supercoiled substrate, at 400 mM NaCl does not relax DNA. In terms of biological role, modifies the topological state of DNA by introducing positive supercoils in an ATP-dependent process. Increases the linking number in steps of +1. Involved in homeostatic control of DNA topology in balance with type II topoisomerase 6 (TopoVI); levels of TopoVI are constant at 80 and 88 degrees Celsius and TopoVI is probably less active at 88 degrees (characterized enzyme is from S.shibatae B12), so reverse gyrase mediates most of the fine-tuning of DNA topology. Changes the DNA linking number step-by-step in a distributive manner. At low protein to DNA ratios mostly relaxes negatively supercoiled substrate, as ratios rise more positive supercoils are introduced. At 90 degrees Celsius introduces 19 positive supercoils into pTZ18R DNA (probably 2860 bp), less than TopR2. Relaxes negatively supercoiled DNA in the absence of ATP. It cleaves transiently a single DNA strand and remains covalently bound to the 5' DNA end through a tyrosine residue. May be involved in DNA damage response. Its activity is inhibited by the DNA-binding protein 7d (Sso7d), suggesting that the Sso7d activity might counteract the overwinding effect of reverse gyrase. Resolves 4-way Holliday junctions (HJ) with 20 bases in each arm in vitro, distorting the junction. Very high protein levels are required, but total enzyme content of the cell (there are 2 reverse gyrases in this organism) is estimated to be 20-200 molecules/cell. HJ resolution does not require either ATPase activity or the active tyrosine. The individual domains do not resolve HJs but do so when mixed. Also unwinds a fork substrate. Its function is as follows. There are 2 genes for this protein in the cell. During exponential growth this is the less expressed isoform (about 52 molecules per cell at 80 degrees Celsius, about 28 molecules at 88 degrees Celsius); this isoform is more active at higher temperature. Grows actively at both 80 and 88 degrees Celsius; survives a long exposure at 45 degrees Celsius without DNA replication or cell division occurring. Experiments using whole cell extracts do not distinguish which isoform is present, the results are probably a mixture of the two forms. This Saccharolobus solfataricus (strain ATCC 35092 / DSM 1617 / JCM 11322 / P2) (Sulfolobus solfataricus) protein is Reverse gyrase 1.